The chain runs to 93 residues: YcgL domain-containing protein VV1_0131 (93 aa).

A YcgL domain is found at M1–K84. The interval L72–D93 is disordered.

The protein is YcgL domain-containing protein VV1_0131 of Vibrio vulnificus (strain CMCP6).